The sequence spans 154 residues: Small ribosomal subunit protein uS13m (154 aa).

Residues 1–30 constitute a mitochondrion transit peptide; the sequence is MLGLRRSATTLFDISQSLLRNVTFHGLRVQ. The disordered stretch occupies residues 121-154; the sequence is RHGLPCRGQRTSTNARTKKGKAVAIAGKKKAPRK. The span at 136 to 154 shows a compositional bias: basic residues; sequence RTKKGKAVAIAGKKKAPRK.

Belongs to the universal ribosomal protein uS13 family. Part of the small ribosomal subunit.

Its subcellular location is the mitochondrion. Its function is as follows. Located at the top of the head of the small subunit, it contacts several helices of the 18S rRNA. This is Small ribosomal subunit protein uS13m (RPS13) from Arabidopsis thaliana (Mouse-ear cress).